Reading from the N-terminus, the 507-residue chain is Arabinose import ATP-binding protein AraG (507 aa).

ABC transporter domains lie at Leu14–Arg249 and Arg249–Thr505. Gly46 to Ser53 serves as a coordination point for ATP.

Belongs to the ABC transporter superfamily. Arabinose importer (TC 3.A.1.2.2) family. As to quaternary structure, the complex is composed of two ATP-binding proteins (AraG), two transmembrane proteins (AraH) and a solute-binding protein (AraF).

It is found in the cell inner membrane. The catalysed reaction is L-arabinose(out) + ATP + H2O = L-arabinose(in) + ADP + phosphate + H(+). Its function is as follows. Part of the ABC transporter complex AraFGH involved in arabinose import. Responsible for energy coupling to the transport system. The sequence is that of Arabinose import ATP-binding protein AraG from Pseudomonas syringae pv. tomato (strain ATCC BAA-871 / DC3000).